A 240-amino-acid chain; its full sequence is Glutathione S-transferase theta-1 (240 aa).

One can recognise a GST N-terminal domain in the interval 2–82 (VLELYLDLLS…YLAHKYKVPD (81 aa)). Residues H40, 53 to 54 (KV), and 66 to 67 (ES) each bind glutathione. A GST C-terminal domain is found at 88–223 (DLQARARVDE…ILKVRDCPPA (136 aa)).

This sequence belongs to the GST superfamily. Theta family. As to quaternary structure, homodimer. In liver, highest expression found in central vein limiting plate hepatocytes. In lung, expressed mainly in club cells of the bronchiolar epithelium and, at low levels, in type II alveolar cells.

The protein resides in the cytoplasm. The enzyme catalyses RX + glutathione = an S-substituted glutathione + a halide anion + H(+). Its function is as follows. Conjugation of reduced glutathione to a wide number of exogenous and endogenous hydrophobic electrophiles. Also binds steroids, bilirubin, carcinogens and numerous organic anions. Has dichloromethane dehalogenase activity. The chain is Glutathione S-transferase theta-1 (Gstt1) from Rattus norvegicus (Rat).